We begin with the raw amino-acid sequence, 238 residues long: Epoxyqueuosine reductase QueH (238 aa).

The [4Fe-4S] cluster site is built by C43, C44, C129, and C132. A disulfide bridge links C211 with C213.

Belongs to the QueH family.

It carries out the reaction epoxyqueuosine(34) in tRNA + AH2 = queuosine(34) in tRNA + A + H2O. It functions in the pathway tRNA modification; tRNA-queuosine biosynthesis. Its function is as follows. Catalyzes the conversion of epoxyqueuosine (oQ) to queuosine (Q), which is a hypermodified base found in the wobble positions of tRNA(Asp), tRNA(Asn), tRNA(His) and tRNA(Tyr). This Staphylococcus epidermidis (strain ATCC 12228 / FDA PCI 1200) protein is Epoxyqueuosine reductase QueH.